The sequence spans 101 residues: Small ribosomal subunit protein bS18c (101 aa).

The protein belongs to the bacterial ribosomal protein bS18 family. Part of the 30S ribosomal subunit.

It is found in the plastid. The protein localises to the chloroplast. The chain is Small ribosomal subunit protein bS18c from Morus indica (Mulberry).